A 151-amino-acid chain; its full sequence is Type 4 adapter protein IcmW (151 aa).

In terms of assembly, the T4BSS is a complex nanomachine composed of several subcomplexes. This subunit is part of the Type IV Coupling Complex (T4CC), a subcomplex composed of the DotLMNYZ core and the IcmSW-LvgA adapter subunits, linked by the C-terminal tail of DotL. Interacts with IcmS. IcmS and IcmW form a stable complex. Interaction with IcmS greatly enhances the stability of IcmW. Interacts directly with the type 4 coupling protein DotL. Interacts with LvgA. Interacts with effector proteins.

Its subcellular location is the cytoplasm. Its activity is regulated as follows. Interaction with DotL is critical for the export of IcmSW-dependent substrates. Functionally, component of the Dot/Icm type IVB secretion system (T4BSS), which is used to inject bacterial effector proteins into eukaryotic host cells. Part of a subcomplex which recruits effector proteins and delivers them to the core transmembrane subcomplex. The IcmS/IcmW protein complex plays an important role in protein translocation by interacting with multiple Dot/Icm effector proteins to facilitate their translocation into host cells. Interaction promotes conformational changes in the effector protein, which may facilitate display of a C-terminal translocation signal. May maintain the substrates in a translocation competent form. Required for intracellular growth in host cells, replicative phagosome formation and phagosome trafficking. The protein is Type 4 adapter protein IcmW of Legionella pneumophila subsp. pneumophila (strain Philadelphia 1 / ATCC 33152 / DSM 7513).